Consider the following 274-residue polypeptide: uncharacterized protein (274 aa).

This sequence belongs to the class IV-like SAM-binding methyltransferase superfamily. RNA methyltransferase TrmH family.

This is an uncharacterized protein from Synechocystis sp. (strain ATCC 27184 / PCC 6803 / Kazusa).